The primary structure comprises 176 residues: MQDRRSSYDYEDLLACGRGELFGAGNAQLPLPPMLMFDRITEINDSGGEHGKGLIRAELDVNPDLWFFACHFKGDPVMPGCLGLDAMWQLVGFFLGWSGGLGPGRALGLGELKFSGQVQPNIKKVVYNIDVKRVMRSKLWLGIADGTMAADGEIFYRAKDLKVGLFRQDAAVQPAV.

His-71 is an active-site residue.

Belongs to the thioester dehydratase family. FabA subfamily. Homodimer.

Its subcellular location is the cytoplasm. The enzyme catalyses a (3R)-hydroxyacyl-[ACP] = a (2E)-enoyl-[ACP] + H2O. It carries out the reaction (3R)-hydroxydecanoyl-[ACP] = (2E)-decenoyl-[ACP] + H2O. It catalyses the reaction (2E)-decenoyl-[ACP] = (3Z)-decenoyl-[ACP]. Its pathway is lipid metabolism; fatty acid biosynthesis. Necessary for the introduction of cis unsaturation into fatty acids. Catalyzes the dehydration of (3R)-3-hydroxydecanoyl-ACP to E-(2)-decenoyl-ACP and then its isomerization to Z-(3)-decenoyl-ACP. Can catalyze the dehydratase reaction for beta-hydroxyacyl-ACPs with saturated chain lengths up to 16:0, being most active on intermediate chain length. This is 3-hydroxydecanoyl-[acyl-carrier-protein] dehydratase from Rhodopseudomonas palustris (strain HaA2).